Here is a 356-residue protein sequence, read N- to C-terminus: OVARIAN TUMOR DOMAIN-containing deubiquitinating enzyme 10 (356 aa).

Residues 86–117 (DYSHQNQQQQHQQEGYTNNYSNNNNGYAWNDQ) are disordered. A compositionally biased stretch (low complexity) spans 89-115 (HQNQQQQHQQEGYTNNYSNNNNGYAWN). Positions 213–337 (FTEVKVPGDG…EVHYNAIYLN (125 aa)) constitute an OTU domain. Asp221 is an active-site residue. The active-site Nucleophile is the Cys224. His330 is an active-site residue.

This sequence belongs to the peptidase C85 family.

The catalysed reaction is Thiol-dependent hydrolysis of ester, thioester, amide, peptide and isopeptide bonds formed by the C-terminal Gly of ubiquitin (a 76-residue protein attached to proteins as an intracellular targeting signal).. Functionally, hydrolase that can remove conjugated ubiquitin from proteins in vitro and may therefore play an important regulatory role at the level of protein turnover by preventing degradation. Cysteine protease with a preference for 'Lys-63' over 'Lys-48' over 'Met-1' -linked ubiquitin (UB) tetramers as substrates. Also cleaves RUB-GST fusion. The protein is OVARIAN TUMOR DOMAIN-containing deubiquitinating enzyme 10 of Arabidopsis thaliana (Mouse-ear cress).